The chain runs to 597 residues: NADH-quinone oxidoreductase subunit C/D (597 aa).

The NADH dehydrogenase I subunit C stretch occupies residues M1 to E188. An NADH dehydrogenase I subunit D region spans residues K211–R597.

It in the N-terminal section; belongs to the complex I 30 kDa subunit family. The protein in the C-terminal section; belongs to the complex I 49 kDa subunit family. NDH-1 is composed of 13 different subunits. Subunits NuoB, CD, E, F, and G constitute the peripheral sector of the complex.

The protein localises to the cell inner membrane. It catalyses the reaction a quinone + NADH + 5 H(+)(in) = a quinol + NAD(+) + 4 H(+)(out). Its function is as follows. NDH-1 shuttles electrons from NADH, via FMN and iron-sulfur (Fe-S) centers, to quinones in the respiratory chain. The immediate electron acceptor for the enzyme in this species is believed to be ubiquinone. Couples the redox reaction to proton translocation (for every two electrons transferred, four hydrogen ions are translocated across the cytoplasmic membrane), and thus conserves the redox energy in a proton gradient. This Buchnera aphidicola subsp. Baizongia pistaciae (strain Bp) protein is NADH-quinone oxidoreductase subunit C/D.